Consider the following 420-residue polypeptide: MRILYYDCFCGISGDMNLAALVDLGVPKKYLIDELLKLNLGSEYEIKIEKGQKLGITGTRVDVILKDEHHNKHELEEVLHNHEHKHNHHEIKNDEPAHSHEHHHRSLRDIEEIINSSTLNDKVKKLSLNIFMKVAEAEAKVHGRELYEVHFHEVGAVDSIVDIVGAAICIDYLKVDKILASRVQVGGGFVRCAHGIMPVPAPATVEILKNIPINTGIVQFETTTPTGAAILAANVKEFTQKLDFIIKKTAYGIGHRDLEIPNVLRVYLGEEESFQDIENQYILETNIDDMNPEIYGYVEEKLFKVGALDVFKTPICMKKGRPGIKLSVLTNEKSEREVLDVIFEETTSIGVRRYKVEKIMLKREFSKVKTEFGDITVKKAYYKGELVKYKPEYEECKDIAREKNVSIHKVYKAVYKQDLK.

The segment at Asn81–His104 is disordered. Over residues Glu90–Ser99 the composition is skewed to basic and acidic residues.

It belongs to the LarC family.

It catalyses the reaction Ni(II)-pyridinium-3,5-bisthiocarboxylate mononucleotide = pyridinium-3,5-bisthiocarboxylate mononucleotide + Ni(2+). Involved in the biosynthesis of a nickel-pincer cofactor ((SCS)Ni(II) pincer complex). Binds Ni(2+), and functions in nickel delivery to pyridinium-3,5-bisthiocarboxylic acid mononucleotide (P2TMN), to form the mature cofactor. Is thus probably required for the activation of nickel-pincer cofactor-dependent enzymes. The sequence is that of Pyridinium-3,5-bisthiocarboxylic acid mononucleotide nickel insertion protein from Clostridium acetobutylicum (strain ATCC 824 / DSM 792 / JCM 1419 / IAM 19013 / LMG 5710 / NBRC 13948 / NRRL B-527 / VKM B-1787 / 2291 / W).